Reading from the N-terminus, the 458-residue chain is ATP synthase subunit beta (458 aa).

148–155 (GGAGVGKT) lines the ATP pocket.

It belongs to the ATPase alpha/beta chains family. As to quaternary structure, F-type ATPases have 2 components, CF(1) - the catalytic core - and CF(0) - the membrane proton channel. CF(1) has five subunits: alpha(3), beta(3), gamma(1), delta(1), epsilon(1). CF(0) has three main subunits: a(1), b(2) and c(9-12). The alpha and beta chains form an alternating ring which encloses part of the gamma chain. CF(1) is attached to CF(0) by a central stalk formed by the gamma and epsilon chains, while a peripheral stalk is formed by the delta and b chains.

Its subcellular location is the cell inner membrane. The enzyme catalyses ATP + H2O + 4 H(+)(in) = ADP + phosphate + 5 H(+)(out). Produces ATP from ADP in the presence of a proton gradient across the membrane. The catalytic sites are hosted primarily by the beta subunits. The protein is ATP synthase subunit beta of Pseudomonas putida (strain W619).